We begin with the raw amino-acid sequence, 62 residues long: UPF0434 protein FTL_1400 (62 aa).

It belongs to the UPF0434 family.

The protein is UPF0434 protein FTL_1400 of Francisella tularensis subsp. holarctica (strain LVS).